A 422-amino-acid chain; its full sequence is Enolase (422 aa).

(2R)-2-phosphoglycerate is bound at residue Q162. The Proton donor role is filled by E204. Mg(2+) contacts are provided by D241, E284, and D311. Positions 336, 365, 366, and 387 each coordinate (2R)-2-phosphoglycerate. K336 acts as the Proton acceptor in catalysis.

This sequence belongs to the enolase family. As to quaternary structure, component of the RNA degradosome, a multiprotein complex involved in RNA processing and mRNA degradation. Mg(2+) serves as cofactor.

It is found in the cytoplasm. The protein localises to the secreted. Its subcellular location is the cell surface. The enzyme catalyses (2R)-2-phosphoglycerate = phosphoenolpyruvate + H2O. Its pathway is carbohydrate degradation; glycolysis; pyruvate from D-glyceraldehyde 3-phosphate: step 4/5. Catalyzes the reversible conversion of 2-phosphoglycerate (2-PG) into phosphoenolpyruvate (PEP). It is essential for the degradation of carbohydrates via glycolysis. The protein is Enolase of Legionella pneumophila (strain Corby).